Consider the following 33-residue polypeptide: Mu-theraphotoxin-Ssp1a (33 aa).

Intrachain disulfides connect Cys2–Cys17, Cys9–Cys22, and Cys16–Cys29. Leu33 carries the post-translational modification Leucine amide.

Belongs to the neurotoxin 10 (Hwtx-1) family. 22 (Htx-4) subfamily. Expressed by the venom gland.

The protein resides in the secreted. In terms of biological role, gating modifier toxin that traps voltage-sensing domain II of voltage-gated sodium channels in the resting state without significantly altering the voltage-dependence of activation and inactivation, or delay in recovery from inactivation. Inhibits hNav1.7/SCN9A (IC(50)=134 nM), followed in rank order of potency by Nav1.6/SCN8A (IC(50)=191 nM), Nav1.2/SCN2A (IC(50)=239 nM), Nav1.3/SCN3A (IC(50)=547 nM) and Nav1.1/SCN1A (IC(50)=674 nM). Its binding to Nav1.2, Nav1.3 and Nav1.7 is slowly reversible and incomplete, with ~25% of Nav1.2, ~50% of Nav1.3 and ~40% of Nav1.7 channels recovering from block after a 30 minutes washout, respectively. Binds in the aqueous cleft formed between the S1-S2 and S3-S4 loops of each channel subtype, primarily targeting the S3-S4 loop. The sequence is that of Mu-theraphotoxin-Ssp1a from Selenotypus sp. (Feather-legged tarantula).